A 284-amino-acid polypeptide reads, in one-letter code: Polyamine aminopropyltransferase (284 aa).

Positions Glu2–Lys237 constitute a PABS domain. S-methyl-5'-thioadenosine is bound at residue Gln31. Residues His62 and Asp86 each contribute to the spermidine site. S-methyl-5'-thioadenosine contacts are provided by residues Glu106 and Asp137–Gly138. Asp155 acts as the Proton acceptor in catalysis. A spermidine-binding site is contributed by Asp155 to Asp158. Pro162 lines the S-methyl-5'-thioadenosine pocket.

It belongs to the spermidine/spermine synthase family. Homodimer or homotetramer.

It is found in the cytoplasm. It catalyses the reaction S-adenosyl 3-(methylsulfanyl)propylamine + putrescine = S-methyl-5'-thioadenosine + spermidine + H(+). The protein operates within amine and polyamine biosynthesis; spermidine biosynthesis; spermidine from putrescine: step 1/1. Functionally, catalyzes the irreversible transfer of a propylamine group from the amino donor S-adenosylmethioninamine (decarboxy-AdoMet) to putrescine (1,4-diaminobutane) to yield spermidine. The sequence is that of Polyamine aminopropyltransferase from Clostridium botulinum (strain Alaska E43 / Type E3).